We begin with the raw amino-acid sequence, 979 residues long: Pro-apoptotic serine protease NMA111 (979 aa).

Residues 1–20 (MKRNGESHLNGEAKKSRTEQ) are compositionally biased toward basic and acidic residues. The segment at 1–43 (MKRNGESHLNGEAKKSRTEQNQEQQDYQDEYYSSSDEELLPSS) is disordered. The segment covering 21 to 34 (NQEQQDYQDEYYSS) has biased composition (low complexity). The tract at residues 65–260 (KVVNSVVSIQ…LPVSRPKRAL (196 aa)) is serine protease. Residues His108, Asp139, and Ser222 each act as charge relay system in the active site. PDZ domains lie at 277–362 (EWQL…FVFQ) and 871–943 (PHYG…VSFD).

This sequence belongs to the peptidase S1C family.

Its subcellular location is the nucleus. Nuclear serine protease which mediates apoptosis. In Lodderomyces elongisporus (strain ATCC 11503 / CBS 2605 / JCM 1781 / NBRC 1676 / NRRL YB-4239) (Yeast), this protein is Pro-apoptotic serine protease NMA111 (NMA111).